The sequence spans 290 residues: D-tagatose-1,6-bisphosphate aldolase subunit KbaY (290 aa).

Asp-82 acts as the Proton donor in catalysis. Zn(2+) contacts are provided by His-83 and His-180. Position 181 (Gly-181) interacts with dihydroxyacetone phosphate. His-208 lines the Zn(2+) pocket. Dihydroxyacetone phosphate is bound by residues 209–211 and 230–233; these read GAS and NVAT.

This sequence belongs to the class II fructose-bisphosphate aldolase family. TagBP aldolase KbaY subfamily. In terms of assembly, homotetramer. Forms a complex with KbaZ. Zn(2+) serves as cofactor.

It catalyses the reaction D-tagatofuranose 1,6-bisphosphate = D-glyceraldehyde 3-phosphate + dihydroxyacetone phosphate. It participates in carbohydrate metabolism; D-tagatose 6-phosphate degradation; D-glyceraldehyde 3-phosphate and glycerone phosphate from D-tagatose 6-phosphate: step 2/2. In terms of biological role, catalytic subunit of the tagatose-1,6-bisphosphate aldolase KbaYZ, which catalyzes the reversible aldol condensation of dihydroxyacetone phosphate (DHAP or glycerone-phosphate) with glyceraldehyde 3-phosphate (G3P) to produce tagatose 1,6-bisphosphate (TBP). Requires KbaZ subunit for full activity and stability. The protein is D-tagatose-1,6-bisphosphate aldolase subunit KbaY of Salmonella arizonae (strain ATCC BAA-731 / CDC346-86 / RSK2980).